A 505-amino-acid chain; its full sequence is uncharacterized protein (505 aa).

Histidine 431 acts as the Proton acceptor in catalysis.

Belongs to the GMC oxidoreductase family. The cofactor is FAD.

This is an uncharacterized protein from Sinorhizobium fredii (strain NBRC 101917 / NGR234).